A 494-amino-acid polypeptide reads, in one-letter code: Uric acid degradation bifunctional protein PucL (494 aa).

An OHCU decarboxylase region spans residues 1–174 (MFTMDDLNQM…EKGETQMKRT (174 aa)). Catalysis depends on H68, which acts as the Proton donor; for OHCU decarboxylase activity. 5-hydroxy-2-oxo-4-ureido-2,5-dihydro-1H-imidazole-5-carboxylate-binding positions include P69, 81–85 (SVREQ), and 116–120 (FILAV). The tract at residues 175 to 494 (MSYGKGNVFA…AAEKCRSLKA (320 aa)) is urate oxidase. The active-site Charge relay system; for urate oxidase activity is the K179. K190 functions as the Charge relay system in the catalytic mechanism. The Charge relay system; for urate oxidase activity role is filled by T239. Urate contacts are provided by T239, D240, F349, R366, I414, Q415, and N441.

It in the N-terminal section; belongs to the OHCU decarboxylase family. In the C-terminal section; belongs to the uricase family.

The catalysed reaction is 5-hydroxy-2-oxo-4-ureido-2,5-dihydro-1H-imidazole-5-carboxylate + H(+) = (S)-allantoin + CO2. It carries out the reaction urate + O2 + H2O = 5-hydroxyisourate + H2O2. The protein operates within purine metabolism; urate degradation; (S)-allantoin from urate: step 1/3. It functions in the pathway purine metabolism; urate degradation; (S)-allantoin from urate: step 3/3. Catalyzes two steps in the degradation of uric acid, i.e. the oxidation of uric acid to 5-hydroxyisourate (HIU) and the stereoselective decarboxylation of 2-oxo-4-hydroxy-4-carboxy-5-ureidoimidazoline (OHCU) to (S)-allantoin. The protein is Uric acid degradation bifunctional protein PucL (pucL) of Bacillus subtilis (strain 168).